We begin with the raw amino-acid sequence, 640 residues long: 1-deoxy-D-xylulose-5-phosphate synthase (640 aa).

Residues histidine 75 and 117–119 each bind thiamine diphosphate; that span reads GHA. Aspartate 146 contributes to the Mg(2+) binding site. Thiamine diphosphate is bound by residues 147–148, asparagine 175, and glutamate 370; that span reads AA. Mg(2+) is bound at residue asparagine 175.

Belongs to the transketolase family. DXPS subfamily. In terms of assembly, homodimer. The cofactor is Mg(2+). It depends on thiamine diphosphate as a cofactor.

The catalysed reaction is D-glyceraldehyde 3-phosphate + pyruvate + H(+) = 1-deoxy-D-xylulose 5-phosphate + CO2. The protein operates within metabolic intermediate biosynthesis; 1-deoxy-D-xylulose 5-phosphate biosynthesis; 1-deoxy-D-xylulose 5-phosphate from D-glyceraldehyde 3-phosphate and pyruvate: step 1/1. Functionally, catalyzes the acyloin condensation reaction between C atoms 2 and 3 of pyruvate and glyceraldehyde 3-phosphate to yield 1-deoxy-D-xylulose-5-phosphate (DXP). The sequence is that of 1-deoxy-D-xylulose-5-phosphate synthase from Chlamydia trachomatis serovar A (strain ATCC VR-571B / DSM 19440 / HAR-13).